A 30-amino-acid chain; its full sequence is V-type proton ATPase catalytic subunit A isoform 2 (30 aa).

This sequence belongs to the ATPase alpha/beta chains family. V-ATPase is a heteromultimeric enzyme composed of a peripheral catalytic V1 complex (main components: subunits A, B, C, D, E, and F) attached to an integral membrane V0 proton pore complex (main component: the proteolipid protein).

It catalyses the reaction ATP + H2O + 4 H(+)(in) = ADP + phosphate + 5 H(+)(out). Its function is as follows. Catalytic subunit of the peripheral V1 complex of vacuolar ATPase. V-ATPase vacuolar ATPase is responsible for acidifying a variety of intracellular compartments in eukaryotic cells. The sequence is that of V-type proton ATPase catalytic subunit A isoform 2 from Equisetum arvense (Field horsetail).